Here is a 291-residue protein sequence, read N- to C-terminus: Undecaprenyl-diphosphatase (291 aa).

A run of 8 helical transmembrane segments spans residues 1 to 21, 48 to 68, 102 to 122, 126 to 146, 162 to 182, 203 to 223, 236 to 256, and 267 to 287; these read MFII…LTEF, SAFT…AWVF, LHVL…DDFI, LFSV…MIIA, INYF…WPGF, SDFT…LSLL, FYIL…KTFL, and FAIY…GFGI.

Belongs to the UppP family.

It localises to the cell membrane. It catalyses the reaction di-trans,octa-cis-undecaprenyl diphosphate + H2O = di-trans,octa-cis-undecaprenyl phosphate + phosphate + H(+). Catalyzes the dephosphorylation of undecaprenyl diphosphate (UPP). Confers resistance to bacitracin. This chain is Undecaprenyl-diphosphatase, found in Staphylococcus aureus (strain MSSA476).